Consider the following 451-residue polypeptide: tRNA-2-methylthio-N(6)-dimethylallyladenosine synthase (451 aa).

An MTTase N-terminal domain is found at 3 to 120 (LKLHIKTYGC…LPEMINHVRI (118 aa)). Residues Cys-12, Cys-49, Cys-83, Cys-157, Cys-161, and Cys-164 each contribute to the [4Fe-4S] cluster site. The 233-residue stretch at 143 to 375 (QAKGPTAFVS…QECIRKQAMK (233 aa)) folds into the Radical SAM core domain. One can recognise a TRAM domain in the interval 378-441 (QAMKGTVQCI…SNSLRGELIS (64 aa)).

Belongs to the methylthiotransferase family. MiaB subfamily. As to quaternary structure, monomer. The cofactor is [4Fe-4S] cluster.

It localises to the cytoplasm. The enzyme catalyses N(6)-dimethylallyladenosine(37) in tRNA + (sulfur carrier)-SH + AH2 + 2 S-adenosyl-L-methionine = 2-methylsulfanyl-N(6)-dimethylallyladenosine(37) in tRNA + (sulfur carrier)-H + 5'-deoxyadenosine + L-methionine + A + S-adenosyl-L-homocysteine + 2 H(+). Its function is as follows. Catalyzes the methylthiolation of N6-(dimethylallyl)adenosine (i(6)A), leading to the formation of 2-methylthio-N6-(dimethylallyl)adenosine (ms(2)i(6)A) at position 37 in tRNAs that read codons beginning with uridine. This is tRNA-2-methylthio-N(6)-dimethylallyladenosine synthase from Baumannia cicadellinicola subsp. Homalodisca coagulata.